Consider the following 290-residue polypeptide: 2-phosphoglycerate kinase (290 aa).

Residues 1 to 89 form the ATP-cone domain; it reads MIIVTDSERK…FWRELRRRKV (89 aa).

Belongs to the 2-phosphoglycerate kinase family. It depends on a divalent metal cation as a cofactor.

It carries out the reaction (2R)-2-phosphoglycerate + ATP = (2R)-2,3-bisphosphoglycerate + ADP + H(+). It participates in thermoadapter biosynthesis; cyclic 2,3-diphosphoglycerate biosynthesis; cyclic 2,3-diphosphoglycerate from 2-phospho-D-glycerate: step 1/2. In terms of biological role, catalyzes the phosphorylation of 2-phosphoglycerate to 2,3-diphosphoglycerate. Involved in the biosynthesis of cyclic 2,3-bisphosphoglycerate, a thermoprotectant. This is 2-phosphoglycerate kinase from Thermococcus kodakarensis (strain ATCC BAA-918 / JCM 12380 / KOD1) (Pyrococcus kodakaraensis (strain KOD1)).